A 463-amino-acid chain; its full sequence is UDP-N-acetylmuramoylalanine--D-glutamate ligase (463 aa).

ATP is bound at residue glycine 109–threonine 115.

It belongs to the MurCDEF family.

The protein resides in the cytoplasm. It catalyses the reaction UDP-N-acetyl-alpha-D-muramoyl-L-alanine + D-glutamate + ATP = UDP-N-acetyl-alpha-D-muramoyl-L-alanyl-D-glutamate + ADP + phosphate + H(+). Its pathway is cell wall biogenesis; peptidoglycan biosynthesis. Functionally, cell wall formation. Catalyzes the addition of glutamate to the nucleotide precursor UDP-N-acetylmuramoyl-L-alanine (UMA). In Leptospira interrogans serogroup Icterohaemorrhagiae serovar Lai (strain 56601), this protein is UDP-N-acetylmuramoylalanine--D-glutamate ligase.